The sequence spans 259 residues: Deoxyribose-phosphate aldolase (259 aa).

Aspartate 102 functions as the Proton donor/acceptor in the catalytic mechanism. The Schiff-base intermediate with acetaldehyde role is filled by lysine 167. Residue lysine 201 is the Proton donor/acceptor of the active site.

This sequence belongs to the DeoC/FbaB aldolase family. DeoC type 2 subfamily.

The protein resides in the cytoplasm. It catalyses the reaction 2-deoxy-D-ribose 5-phosphate = D-glyceraldehyde 3-phosphate + acetaldehyde. It participates in carbohydrate degradation; 2-deoxy-D-ribose 1-phosphate degradation; D-glyceraldehyde 3-phosphate and acetaldehyde from 2-deoxy-alpha-D-ribose 1-phosphate: step 2/2. Functionally, catalyzes a reversible aldol reaction between acetaldehyde and D-glyceraldehyde 3-phosphate to generate 2-deoxy-D-ribose 5-phosphate. The polypeptide is Deoxyribose-phosphate aldolase (Shigella flexneri).